The primary structure comprises 884 residues: Alanine--tRNA ligase (884 aa).

Residues His574, His578, Cys675, and His679 each coordinate Zn(2+).

The protein belongs to the class-II aminoacyl-tRNA synthetase family. Zn(2+) serves as cofactor.

Its subcellular location is the cytoplasm. It catalyses the reaction tRNA(Ala) + L-alanine + ATP = L-alanyl-tRNA(Ala) + AMP + diphosphate. Its function is as follows. Catalyzes the attachment of alanine to tRNA(Ala) in a two-step reaction: alanine is first activated by ATP to form Ala-AMP and then transferred to the acceptor end of tRNA(Ala). Also edits incorrectly charged Ser-tRNA(Ala) and Gly-tRNA(Ala) via its editing domain. This chain is Alanine--tRNA ligase, found in Ralstonia nicotianae (strain ATCC BAA-1114 / GMI1000) (Ralstonia solanacearum).